Here is a 554-residue protein sequence, read N- to C-terminus: Glucose-6-phosphate isomerase (554 aa).

Glutamate 358 functions as the Proton donor in the catalytic mechanism. Active-site residues include histidine 389 and lysine 515. Positions 527-540 are enriched in polar residues; sequence ADNSPAPQSDSSTD. Residues 527-554 form a disordered region; the sequence is ADNSPAPQSDSSTDALVRRYRSERGRTS. Residues 542-554 are compositionally biased toward basic and acidic residues; the sequence is LVRRYRSERGRTS.

The protein belongs to the GPI family.

Its subcellular location is the cytoplasm. It carries out the reaction alpha-D-glucose 6-phosphate = beta-D-fructose 6-phosphate. Its pathway is carbohydrate biosynthesis; gluconeogenesis. It participates in carbohydrate degradation; glycolysis; D-glyceraldehyde 3-phosphate and glycerone phosphate from D-glucose: step 2/4. Catalyzes the reversible isomerization of glucose-6-phosphate to fructose-6-phosphate. In Mycobacterium avium (strain 104), this protein is Glucose-6-phosphate isomerase.